The following is a 129-amino-acid chain: Prefoldin subunit 6 (129 aa).

Ala2 is modified (N-acetylalanine). Lys21 is modified (N6-acetyllysine). Lys66 carries the N6-acetyllysine; alternate modification. Lys66 participates in a covalent cross-link: Glycyl lysine isopeptide (Lys-Gly) (interchain with G-Cter in SUMO1); alternate. A Glycyl lysine isopeptide (Lys-Gly) (interchain with G-Cter in SUMO2); alternate cross-link involves residue Lys66.

Belongs to the prefoldin subunit beta family. Heterohexamer of two PFD-alpha type and four PFD-beta type subunits. Component of the PAQosome complex which is responsible for the biogenesis of several protein complexes and which consists of R2TP complex members RUVBL1, RUVBL2, RPAP3 and PIH1D1, URI complex members PFDN2, PFDN6, PDRG1, UXT and URI1 as well as ASDURF, POLR2E and DNAAF10/WDR92.

Binds specifically to cytosolic chaperonin (c-CPN) and transfers target proteins to it. Binds to nascent polypeptide chain and promotes folding in an environment in which there are many competing pathways for nonnative proteins. This is Prefoldin subunit 6 (PFDN6) from Homo sapiens (Human).